The following is a 395-amino-acid chain: Acid ceramidase (395 aa).

A signal peptide spans 1-21 (MLGRSRLTFVLLSVTVTCSVA). Cys31 and Cys340 are oxidised to a cystine. The active-site Nucleophile is Cys143. N-linked (GlcNAc...) asparagine glycans are attached at residues Asn173, Asn259, Asn342, and Asn348. An intrachain disulfide couples Cys388 to Cys392.

The protein belongs to the acid ceramidase family. As to quaternary structure, heterodimer; disulfide-linked. The heterodimer is composed of the disulfide-linked alpha and beta chains produced by autocatalytic cleavage of the precursor. Post-translationally, N-glycosylated. Proteolytically cleaved into two chains alpha and beta that remain associated via a disulfide bond. Cleavage gives rise to a conformation change that activates the enzyme. The same catalytic Cys residue mediates the autoproteolytic cleavage and subsequent hydrolysis of lipid substrates. The beta chain may undergo an additional C-terminal processing.

The protein localises to the lysosome. It is found in the secreted. The catalysed reaction is an N-acylsphing-4-enine + H2O = sphing-4-enine + a fatty acid. It catalyses the reaction N-dodecanoylsphing-4-enine + H2O = dodecanoate + sphing-4-enine. It carries out the reaction N-tetradecanoylsphing-4-enine + H2O = tetradecanoate + sphing-4-enine. The enzyme catalyses N-hexadecanoylsphing-4-enine + H2O = sphing-4-enine + hexadecanoate. The catalysed reaction is N-octadecanoylsphing-4-enine + H2O = sphing-4-enine + octadecanoate. It catalyses the reaction N-dodecanoyl-(4R)-hydroxysphinganine + H2O = (4R)-hydroxysphinganine + dodecanoate. It carries out the reaction N-(dodecanoyl)-sphinganine + H2O = dodecanoate + sphinganine. The enzyme catalyses N-(acetyl)-sphing-4-enine + H2O = sphing-4-enine + acetate. The catalysed reaction is N-(hexanoyl)sphing-4-enine + H2O = hexanoate + sphing-4-enine. It catalyses the reaction N-octanoylsphing-4-enine + H2O = octanoate + sphing-4-enine. It carries out the reaction N-(9Z-octadecenoyl)-sphing-4-enine + H2O = sphing-4-enine + (9Z)-octadecenoate. The enzyme catalyses N-dodecanoylethanolamine + H2O = dodecanoate + ethanolamine. The protein operates within lipid metabolism; sphingolipid metabolism. In terms of biological role, lysosomal ceramidase that hydrolyzes sphingolipid ceramides into sphingosine and free fatty acids at acidic pH. Ceramides, sphingosine, and its phosphorylated form sphingosine-1-phosphate are bioactive lipids that mediate cellular signaling pathways regulating several biological processes including cell proliferation, apoptosis and differentiation. Has a higher catalytic efficiency towards C12-ceramides versus other ceramides. Also catalyzes the reverse reaction allowing the synthesis of ceramides from fatty acids and sphingosine. For the reverse synthetic reaction, the natural sphingosine D-erythro isomer is more efficiently utilized as a substrate compared to D-erythro-dihydrosphingosine and D-erythro-phytosphingosine, while the fatty acids with chain lengths of 12 or 14 carbons are the most efficiently used. Also has an N-acylethanolamine hydrolase activity. By regulating the levels of ceramides, sphingosine and sphingosine-1-phosphate in the epidermis, mediates the calcium-induced differentiation of epidermal keratinocytes. Also indirectly regulates tumor necrosis factor/TNF-induced apoptosis. By regulating the intracellular balance between ceramides and sphingosine, in adrenocortical cells, probably also acts as a regulator of steroidogenesis. The polypeptide is Acid ceramidase (Balaenoptera acutorostrata scammoni (North Pacific minke whale)).